The chain runs to 187 residues: Macro domain-containing protein MM_0177 (187 aa).

The Macro domain maps to Val8 to Leu187.

It belongs to the MacroD-type family.

The sequence is that of Macro domain-containing protein MM_0177 from Methanosarcina mazei (strain ATCC BAA-159 / DSM 3647 / Goe1 / Go1 / JCM 11833 / OCM 88) (Methanosarcina frisia).